The primary structure comprises 631 residues: Nucleoside triphosphatase I (631 aa).

The Helicase ATP-binding domain maps to 42-204 (FLGLDSMHSL…TMLVNLLRPG (163 aa)). 55–62 (HETGVGKT) contributes to the ATP binding site. Positions 141–144 (DECH) match the DEXH box motif. Residues 367 to 532 (KFIDVCLGIL…EFVQLFRVFK (166 aa)) enclose the Helicase C-terminal domain. Residues 457-524 (DIFILDMTWN…EIIQSKSKEF (68 aa)) form a binding to the cap-specific mRNA (nucleoside-2'-O-)-methyltransferase region.

The protein belongs to the helicase family. NPH I subfamily. In terms of assembly, monomer. Interacts (via C-terminus) with RAP94/OPG109 (via N-terminus). Interacts with the cap-specific mRNA (nucleoside-2'-O-)-methyltransferase OPG102.

It is found in the virion. It catalyses the reaction a ribonucleoside 5'-triphosphate + H2O = a ribonucleoside 5'-diphosphate + phosphate + H(+). Its function is as follows. DNA-dependent ATPase that acts as a 5' to 3' translocase on single-stranded DNA and thereby plays a role in transcription termination of viral early genes. Uses forward translocation in concert with the viral RNA polymerase RAP94/OPG109 subunit and the capping enzyme/VTF to catalyze release of UUUUUNU-containing nascent RNA from the elongation complex. In addition, acts as a positive elongation factor to assist transcription through problematic sequences. This chain is Nucleoside triphosphatase I (OPG123), found in Bos taurus (Bovine).